A 304-amino-acid chain; its full sequence is Tyrosine recombinase XerD (304 aa).

The Core-binding (CB) domain occupies 1–92 (MKARVLAKTW…VARGLHKFAL (92 aa)). In terms of domain architecture, Tyr recombinase spans 113 to 298 (HLPDTLSINE…TADSLREVWR (186 aa)). Residues Arg-156, Lys-180, His-250, Arg-253, and His-276 contribute to the active site. Tyr-285 acts as the O-(3'-phospho-DNA)-tyrosine intermediate in catalysis.

The protein belongs to the 'phage' integrase family. XerD subfamily. Forms a cyclic heterotetrameric complex composed of two molecules of XerC and two molecules of XerD.

It is found in the cytoplasm. In terms of biological role, site-specific tyrosine recombinase, which acts by catalyzing the cutting and rejoining of the recombining DNA molecules. The XerC-XerD complex is essential to convert dimers of the bacterial chromosome into monomers to permit their segregation at cell division. It also contributes to the segregational stability of plasmids. This is Tyrosine recombinase XerD from Corynebacterium glutamicum (strain ATCC 13032 / DSM 20300 / JCM 1318 / BCRC 11384 / CCUG 27702 / LMG 3730 / NBRC 12168 / NCIMB 10025 / NRRL B-2784 / 534).